Here is a 351-residue protein sequence, read N- to C-terminus: UDP-N-acetylglucosamine--N-acetylmuramyl-(pentapeptide) pyrophosphoryl-undecaprenol N-acetylglucosamine transferase (351 aa).

UDP-N-acetyl-alpha-D-glucosamine contacts are provided by residues 13 to 15 (TGG), Asn125, Arg161, Ser189, Ile241, 260 to 265 (ALTVCE), and Gln285.

Belongs to the glycosyltransferase 28 family. MurG subfamily.

It localises to the cell inner membrane. The catalysed reaction is di-trans,octa-cis-undecaprenyl diphospho-N-acetyl-alpha-D-muramoyl-L-alanyl-D-glutamyl-meso-2,6-diaminopimeloyl-D-alanyl-D-alanine + UDP-N-acetyl-alpha-D-glucosamine = di-trans,octa-cis-undecaprenyl diphospho-[N-acetyl-alpha-D-glucosaminyl-(1-&gt;4)]-N-acetyl-alpha-D-muramoyl-L-alanyl-D-glutamyl-meso-2,6-diaminopimeloyl-D-alanyl-D-alanine + UDP + H(+). The protein operates within cell wall biogenesis; peptidoglycan biosynthesis. Its function is as follows. Cell wall formation. Catalyzes the transfer of a GlcNAc subunit on undecaprenyl-pyrophosphoryl-MurNAc-pentapeptide (lipid intermediate I) to form undecaprenyl-pyrophosphoryl-MurNAc-(pentapeptide)GlcNAc (lipid intermediate II). The protein is UDP-N-acetylglucosamine--N-acetylmuramyl-(pentapeptide) pyrophosphoryl-undecaprenol N-acetylglucosamine transferase of Haemophilus influenzae (strain 86-028NP).